A 75-amino-acid chain; its full sequence is Beta-defensin 30 (75 aa).

The N-terminal stretch at 1–22 (MGSLQLILVLFVLLSDVPPVRS) is a signal peptide. 3 disulfide bridges follow: Cys-35–Cys-62, Cys-42–Cys-56, and Cys-46–Cys-63.

It belongs to the beta-defensin family.

Its subcellular location is the secreted. Functionally, has antibacterial activity. This is Beta-defensin 30 (Defb30) from Rattus norvegicus (Rat).